A 61-amino-acid polypeptide reads, in one-letter code: Small ribosomal subunit protein eS31 (61 aa).

Positions 22, 25, 38, and 41 each coordinate Zn(2+). The C4-type zinc finger occupies C22–C41.

The protein belongs to the eukaryotic ribosomal protein eS31 family. In terms of assembly, part of the 30S ribosomal subunit. Requires Zn(2+) as cofactor.

This is Small ribosomal subunit protein eS31 from Nanoarchaeum equitans (strain Kin4-M).